A 472-amino-acid polypeptide reads, in one-letter code: Coenzyme F(430) synthetase (472 aa).

119–125 (GVKAKTS) lines the ATP pocket.

This sequence belongs to the MurCDEF family.

It carries out the reaction 15,17(3)-seco-F430-17(3)-acid + ATP = coenzyme F430 + ADP + phosphate. In terms of biological role, involved in the biosynthesis of the unique nickel-containing tetrapyrrole coenzyme F430, the prosthetic group of methyl-coenzyme M reductase (MCR), which plays a key role in methanogenesis and anaerobic methane oxidation. Catalyzes the activation the g-propionate side chain of 15,17(3)-seco-F430-17(3)-acid (seco-F430) for intramolecular C-C bond formation to yield the carbocyclic F ring of coenzyme F430. This chain is Coenzyme F(430) synthetase, found in Methanosarcina acetivorans (strain ATCC 35395 / DSM 2834 / JCM 12185 / C2A).